A 169-amino-acid polypeptide reads, in one-letter code: Centrin-1 (169 aa).

Residues 1–21 (MHSRKGASSLPRGRGAGKKTE) form an essential for homooligomerization region. The disordered stretch occupies residues 1–25 (MHSRKGASSLPRGRGAGKKTELTEE). 4 consecutive EF-hand domains span residues 25 to 60 (EQRQ…LGFE), 61 to 96 (PKKE…KMAE), 98 to 133 (DPRE…LGEN), and 134 to 169 (LTDE…TNLF). Asp-38, Asp-40, Ser-42, Cys-44, Glu-49, Asp-74, Asp-76, Thr-78, Ser-80, and Glu-85 together coordinate Ca(2+).

The protein belongs to the centrin family. In terms of assembly, monomer. Homooligomerizes in a Ca(2+)-dependent manner. Interaction via the C-terminus with other proteins disrupts and/or prevents homooligomerization. Interacts with SFI1.

It is found in the cytoplasm. The protein resides in the cytoskeleton. It localises to the microtubule organizing center. The protein localises to the centrosome. In terms of biological role, acts as a calcium sensor. Part of the centrosome outer core complex. The sequence is that of Centrin-1 from Toxoplasma gondii (strain ATCC 50611 / Me49).